Consider the following 705-residue polypeptide: Elongation factor G (705 aa).

Positions 8–294 (ELCRNFGIMA…SVIDYLPSPL (287 aa)) constitute a tr-type G domain. Residues 17-24 (AHIDAGKT), 92-96 (DTPGH), and 146-149 (NKMD) each bind GTP.

This sequence belongs to the TRAFAC class translation factor GTPase superfamily. Classic translation factor GTPase family. EF-G/EF-2 subfamily.

It localises to the cytoplasm. In terms of biological role, catalyzes the GTP-dependent ribosomal translocation step during translation elongation. During this step, the ribosome changes from the pre-translocational (PRE) to the post-translocational (POST) state as the newly formed A-site-bound peptidyl-tRNA and P-site-bound deacylated tRNA move to the P and E sites, respectively. Catalyzes the coordinated movement of the two tRNA molecules, the mRNA and conformational changes in the ribosome. This Cereibacter sphaeroides (strain ATCC 17023 / DSM 158 / JCM 6121 / CCUG 31486 / LMG 2827 / NBRC 12203 / NCIMB 8253 / ATH 2.4.1.) (Rhodobacter sphaeroides) protein is Elongation factor G.